Reading from the N-terminus, the 359-residue chain is E3 ubiquitin-protein ligase RNF146 (359 aa).

An RING-type zinc finger spans residues 36–74; sequence CAICLQTCVHPVSLPCKHVFCYLCVKGASWLGKRCALCR. Residues K84 and K94 each participate in a glycyl lysine isopeptide (Lys-Gly) (interchain with G-Cter in ubiquitin) cross-link. The region spanning 91-167 is the WWE domain; it reads EELKAASRGN…EHGRRRKIKR (77 aa). Residues Y107, R110, and W114 each coordinate a glycoprotein. A Glycyl lysine isopeptide (Lys-Gly) (interchain with G-Cter in ubiquitin) cross-link involves residue K130. Residues Y144, Q153, R163, and K175 each coordinate a glycoprotein. K175 is covalently cross-linked (Glycyl lysine isopeptide (Lys-Gly) (interchain with G-Cter in ubiquitin)). The tract at residues 259–359 is disordered; sequence ERSHRGEGEE…PDGQCTVTEV (101 aa). Over residues 284–298 the composition is skewed to acidic residues; sequence SVEETESDASSDSED. Phosphoserine is present on residues S290 and S294. A compositionally biased stretch (polar residues) spans 306–322; that stretch reads HSLTQQRLLVPNANQTV.

Can form homooligomers. Interacts with PARsylated AXIN1, AXIN2, BLZF1, CASC3, H1-2, IPO7, LIG3, NCL, PARP1, XRCC1, XRCC5 and XRCC6. Interacts with DDB1, DHX15, IQGAP1, LRPPRC, PARP2, PRKDC, RUVBL2, TNKS1 and TNKS2. Binding often leads to interactor ubiquitination, in the presence of the appropriate E1 and E2 enzymes, and proteasomal degradation. Post-translationally, ubiquitinated; autoubiquitinated. Autoubiquitination is enhanced upon poly(ADP-ribose)-binding.

It localises to the cytoplasm. The protein localises to the cytosol. Its subcellular location is the nucleus. The catalysed reaction is S-ubiquitinyl-[E2 ubiquitin-conjugating enzyme]-L-cysteine + [acceptor protein]-L-lysine = [E2 ubiquitin-conjugating enzyme]-L-cysteine + N(6)-ubiquitinyl-[acceptor protein]-L-lysine.. It participates in protein modification; protein ubiquitination. E3 ubiquitin-protein ligase that specifically binds poly-ADP-ribosylated (PARsylated) proteins and mediates their ubiquitination and subsequent degradation. May regulate many important biological processes, such as cell survival and DNA damage response. Acts as an activator of the Wnt signaling pathway by mediating the ubiquitination of PARsylated AXIN1 and AXIN2, 2 key components of the beta-catenin destruction complex. Acts in cooperation with tankyrase proteins (TNKS and TNKS2), which mediate PARsylation of target proteins AXIN1, AXIN2, BLZF1, CASC3, TNKS and TNKS2. Recognizes and binds tankyrase-dependent PARsylated proteins via its WWE domain and mediates their ubiquitination, leading to their degradation. Different ubiquitin linkage types have been observed: TNKS2 undergoes ubiquitination at 'Lys-48' and 'Lys-63', while AXIN1 is only ubiquitinated at 'Lys-48'. May regulate TNKS and TNKS2 subcellular location, preventing aggregation at a centrosomal location. Neuroprotective protein. Protects the brain against N-methyl-D-aspartate (NMDA) receptor-mediated glutamate excitotoxicity and ischemia, by interfering with PAR-induced cell death, called parthanatos. Prevents nuclear translocation of AIFM1 in a PAR-binding dependent manner. Does not affect PARP1 activation. Protects against cell death induced by DNA damaging agents, such as N-methyl-N-nitro-N-nitrosoguanidine (MNNG) and rescues cells from G1 arrest. Promotes cell survival after gamma-irradiation. Facilitates DNA repair. The sequence is that of E3 ubiquitin-protein ligase RNF146 (RNF146) from Ailuropoda melanoleuca (Giant panda).